A 406-amino-acid chain; its full sequence is S-adenosylmethionine synthase (406 aa).

141-146 (GQGSMD) contributes to the ATP binding site.

It belongs to the AdoMet synthase 2 family. Homodimer. Requires Mg(2+) as cofactor.

The enzyme catalyses L-methionine + ATP + H2O = S-adenosyl-L-methionine + phosphate + diphosphate. It participates in amino-acid biosynthesis; S-adenosyl-L-methionine biosynthesis; S-adenosyl-L-methionine from L-methionine: step 1/1. Its function is as follows. Catalyzes the formation of S-adenosylmethionine from methionine and ATP. In Methanocaldococcus jannaschii (strain ATCC 43067 / DSM 2661 / JAL-1 / JCM 10045 / NBRC 100440) (Methanococcus jannaschii), this protein is S-adenosylmethionine synthase (mat).